The sequence spans 209 residues: ATP-dependent Clp protease proteolytic subunit (209 aa).

Ser-107 acts as the Nucleophile in catalysis. The active site involves His-132.

The protein belongs to the peptidase S14 family. In terms of assembly, fourteen ClpP subunits assemble into 2 heptameric rings which stack back to back to give a disk-like structure with a central cavity, resembling the structure of eukaryotic proteasomes.

It localises to the cytoplasm. It catalyses the reaction Hydrolysis of proteins to small peptides in the presence of ATP and magnesium. alpha-casein is the usual test substrate. In the absence of ATP, only oligopeptides shorter than five residues are hydrolyzed (such as succinyl-Leu-Tyr-|-NHMec, and Leu-Tyr-Leu-|-Tyr-Trp, in which cleavage of the -Tyr-|-Leu- and -Tyr-|-Trp bonds also occurs).. In terms of biological role, cleaves peptides in various proteins in a process that requires ATP hydrolysis. Has a chymotrypsin-like activity. Plays a major role in the degradation of misfolded proteins. The chain is ATP-dependent Clp protease proteolytic subunit from Ruegeria pomeroyi (strain ATCC 700808 / DSM 15171 / DSS-3) (Silicibacter pomeroyi).